Consider the following 136-residue polypeptide: Large ribosomal subunit protein bL19 (136 aa).

It belongs to the bacterial ribosomal protein bL19 family.

This protein is located at the 30S-50S ribosomal subunit interface and may play a role in the structure and function of the aminoacyl-tRNA binding site. This chain is Large ribosomal subunit protein bL19, found in Xylella fastidiosa (strain M23).